A 1090-amino-acid polypeptide reads, in one-letter code: Protein CHROMATIN REMODELING 24 (1090 aa).

2 disordered regions span residues M1–L51 and V247–R273. Residues T44 to L51 carry the Nuclear localization signal motif. Residues R256–R273 are compositionally biased toward basic and acidic residues. The Helicase ATP-binding domain occupies W389–G564. An ATP-binding site is contributed by D402–T409. The DEAH box signature appears at D515–H518. The Helicase C-terminal domain maps to F736–R895. The stretch at D1043–N1069 forms a coiled coil.

This sequence belongs to the SNF2/RAD54 helicase family.

Its subcellular location is the nucleus. DNA helicase that acts as an essential component of the spindle assembly checkpoint. Probable chromatin remodeling factor that regulate homologous recombination (HR) and non-homologous recombination (NHR). This Arabidopsis thaliana (Mouse-ear cress) protein is Protein CHROMATIN REMODELING 24.